The primary structure comprises 113 residues: Ig heavy chain V-III region A4 (113 aa).

The 113-residue stretch at 1-113 (EVKLEESGGG…YWGQGTLVTV (113 aa)) folds into the Ig-like domain. A disulfide bond links C22 and C98.

This is Ig heavy chain V-III region A4 from Mus musculus (Mouse).